A 326-amino-acid chain; its full sequence is 4-hydroxythreonine-4-phosphate dehydrogenase (326 aa).

Residues His134 and Thr135 each coordinate substrate. A divalent metal cation-binding residues include His164, His209, and His264. Positions 272, 281, and 290 each coordinate substrate.

Belongs to the PdxA family. In terms of assembly, homodimer. Zn(2+) is required as a cofactor. Mg(2+) serves as cofactor. It depends on Co(2+) as a cofactor.

It is found in the cytoplasm. It catalyses the reaction 4-(phosphooxy)-L-threonine + NAD(+) = 3-amino-2-oxopropyl phosphate + CO2 + NADH. It participates in cofactor biosynthesis; pyridoxine 5'-phosphate biosynthesis; pyridoxine 5'-phosphate from D-erythrose 4-phosphate: step 4/5. Its function is as follows. Catalyzes the NAD(P)-dependent oxidation of 4-(phosphooxy)-L-threonine (HTP) into 2-amino-3-oxo-4-(phosphooxy)butyric acid which spontaneously decarboxylates to form 3-amino-2-oxopropyl phosphate (AHAP). The chain is 4-hydroxythreonine-4-phosphate dehydrogenase from Colwellia psychrerythraea (strain 34H / ATCC BAA-681) (Vibrio psychroerythus).